A 289-amino-acid polypeptide reads, in one-letter code: Protease HtpX homolog (289 aa).

2 helical membrane passes run 8-28 (LALL…VIGG) and 29-49 (SSGL…SWYQ). Histidine 132 provides a ligand contact to Zn(2+). The active site involves glutamate 133. Residue histidine 136 coordinates Zn(2+). 2 helical membrane-spanning segments follow: residues 151–171 (VAGA…FGGI) and 183–203 (LGVL…QLAI). Glutamate 208 lines the Zn(2+) pocket.

The protein belongs to the peptidase M48B family. It depends on Zn(2+) as a cofactor.

It localises to the cell inner membrane. This chain is Protease HtpX homolog, found in Nostoc sp. (strain PCC 7120 / SAG 25.82 / UTEX 2576).